Here is a 141-residue protein sequence, read N- to C-terminus: Large ribosomal subunit protein uL22 (141 aa).

Positions 110–141 (EEKKTVAKKTTTTKAPAKKTTSTKKATVKKES) are disordered. Over residues 117-134 (KKTTTTKAPAKKTTSTKK) the composition is skewed to low complexity.

It belongs to the universal ribosomal protein uL22 family. Part of the 50S ribosomal subunit.

Its function is as follows. This protein binds specifically to 23S rRNA; its binding is stimulated by other ribosomal proteins, e.g. L4, L17, and L20. It is important during the early stages of 50S assembly. It makes multiple contacts with different domains of the 23S rRNA in the assembled 50S subunit and ribosome. The globular domain of the protein is located near the polypeptide exit tunnel on the outside of the subunit, while an extended beta-hairpin is found that lines the wall of the exit tunnel in the center of the 70S ribosome. The chain is Large ribosomal subunit protein uL22 from Campylobacter jejuni (strain RM1221).